Reading from the N-terminus, the 305-residue chain is Ankyrin repeat domain-containing protein 23 (305 aa).

The stretch at 41 to 72 forms a coiled coil; sequence QEAVAREKLKLEEEKKKKLERFNSTRFNLDNL. Over residues 83–92 the composition is skewed to basic residues; the sequence is KKRLRHRVPP. A disordered region spans residues 83–104; the sequence is KKRLRHRVPPRKPEPLVKPQSQ. ANK repeat units follow at residues 143-172, 176-205, 209-238, and 242-271; these read LHRT…TVDA, LDRT…RVNA, IGST…HLNA, and EGDT…ELGV. The interaction with TTN stretch occupies residues 178–195; sequence RTPVFWACRGGHLVILKQ.

As to quaternary structure, interacts with titin/TTN and MYPN. As to expression, mainly expressed in heart, skeletal muscle and brown adipose tissues.

It localises to the nucleus. May be involved in the energy metabolism. Could be a molecular link between myofibrillar stretch-induced signaling pathways and muscle gene expression. The chain is Ankyrin repeat domain-containing protein 23 (ANKRD23) from Homo sapiens (Human).